A 61-amino-acid polypeptide reads, in one-letter code: Large ribosomal subunit protein uL30 (61 aa).

The segment at 1 to 20 (MSQKKVTVRQVGSPIGRKPE) is disordered.

It belongs to the universal ribosomal protein uL30 family. As to quaternary structure, part of the 50S ribosomal subunit.

In Hyphomonas neptunium (strain ATCC 15444), this protein is Large ribosomal subunit protein uL30.